The primary structure comprises 288 residues: F420-non-reducing hydrogenase vhu subunit G (288 aa).

The protein belongs to the [NiFe]/[NiFeSe] hydrogenase small subunit family. The F420-non-reducing hydrogenase vhu is composed of four subunits; VhuA, VhuD, VhuG and VhuU.

The protein is F420-non-reducing hydrogenase vhu subunit G (vhuG) of Methanocaldococcus jannaschii (strain ATCC 43067 / DSM 2661 / JAL-1 / JCM 10045 / NBRC 100440) (Methanococcus jannaschii).